The chain runs to 255 residues: ATP synthase subunit a (255 aa).

The propeptide at 1 to 7 is removed in mature form; it reads MMFNNII. A run of 6 helical transmembrane segments spans residues 35–55, 91–111, 120–140, 147–167, 177–197, and 208–228; these read FGFYIIISTIIILTLHLLITY, YFPFIYGLFIFILMNNLLGLI, HFILTFFISFTVVLGATILGF, FFSLFVPSGCPLGLLPLLVLI, VSLGLRLSANILSGHMLLVIL, and GIFYFLIGLIPLAFIFAFSGL.

This sequence belongs to the ATPase A chain family. F-type ATPases have 2 components, CF(1) - the catalytic core - and CF(0) - the membrane proton channel. CF(1) has five subunits: alpha(3), beta(3), gamma(1), delta(1), epsilon(1). CF(0) has three main subunits: a, b and c.

It is found in the mitochondrion inner membrane. Its function is as follows. Mitochondrial membrane ATP synthase (F(1)F(0) ATP synthase or Complex V) produces ATP from ADP in the presence of a proton gradient across the membrane which is generated by electron transport complexes of the respiratory chain. F-type ATPases consist of two structural domains, F(1) - containing the extramembraneous catalytic core and F(0) - containing the membrane proton channel, linked together by a central stalk and a peripheral stalk. During catalysis, ATP synthesis in the catalytic domain of F(1) is coupled via a rotary mechanism of the central stalk subunits to proton translocation. Key component of the proton channel; it may play a direct role in the translocation of protons across the membrane. In Trichophyton rubrum (Athlete's foot fungus), this protein is ATP synthase subunit a (ATP6).